The following is a 294-amino-acid chain: tRNA pseudouridine synthase B (294 aa).

Asp-39 acts as the Nucleophile in catalysis.

Belongs to the pseudouridine synthase TruB family. Type 1 subfamily.

The enzyme catalyses uridine(55) in tRNA = pseudouridine(55) in tRNA. Responsible for synthesis of pseudouridine from uracil-55 in the psi GC loop of transfer RNAs. This chain is tRNA pseudouridine synthase B, found in Streptococcus pyogenes serotype M3 (strain ATCC BAA-595 / MGAS315).